The following is a 208-amino-acid chain: Outer-membrane lipoprotein LolB (208 aa).

An N-terminal signal peptide occupies residues 1–21; the sequence is MLSSKRRLMRLLPLASLLLTA. Residue C22 is the site of N-palmitoyl cysteine attachment. C22 carries the S-diacylglycerol cysteine lipid modification.

This sequence belongs to the LolB family. In terms of assembly, monomer.

The protein localises to the cell outer membrane. In terms of biological role, plays a critical role in the incorporation of lipoproteins in the outer membrane after they are released by the LolA protein. This chain is Outer-membrane lipoprotein LolB, found in Erwinia tasmaniensis (strain DSM 17950 / CFBP 7177 / CIP 109463 / NCPPB 4357 / Et1/99).